A 93-amino-acid polypeptide reads, in one-letter code: MSRSLRKGPFIDLHLLRKVEKVIKTGDKKPIRTWSRRSTIFPKMIGLTISVHNGKQHIPVFISDEMVGHKLGEFAPTRTYRGHSVDKKIKKRY.

It belongs to the universal ribosomal protein uS19 family.

Its function is as follows. Protein S19 forms a complex with S13 that binds strongly to the 16S ribosomal RNA. This chain is Small ribosomal subunit protein uS19, found in Blochmanniella floridana.